Reading from the N-terminus, the 437-residue chain is Serine carboxypeptidase-like 7 (437 aa).

An N-terminal signal peptide occupies residues 1-25 (MANDYVSTVLLLLSLLIFLSQRTDS). Cystine bridges form between Cys84–Cys327, Cys248–Cys262, and Cys286–Cys293. N-linked (GlcNAc...) asparagine glycosylation occurs at Asn105. Ser180 is an active-site residue. Asn346 is a glycosylation site (N-linked (GlcNAc...) asparagine). Asp362 is an active-site residue. N-linked (GlcNAc...) asparagine glycosylation is present at Asn378. Residue His415 is part of the active site.

The protein belongs to the peptidase S10 family. As to expression, ubiquitous.

It is found in the secreted. Functionally, probable carboxypeptidase. This is Serine carboxypeptidase-like 7 (SCPL7) from Arabidopsis thaliana (Mouse-ear cress).